The following is a 184-amino-acid chain: Elongation factor P (184 aa).

Belongs to the elongation factor P family.

The protein resides in the cytoplasm. It participates in protein biosynthesis; polypeptide chain elongation. In terms of biological role, involved in peptide bond synthesis. Stimulates efficient translation and peptide-bond synthesis on native or reconstituted 70S ribosomes in vitro. Probably functions indirectly by altering the affinity of the ribosome for aminoacyl-tRNA, thus increasing their reactivity as acceptors for peptidyl transferase. This is Elongation factor P from Leptothrix cholodnii (strain ATCC 51168 / LMG 8142 / SP-6) (Leptothrix discophora (strain SP-6)).